The following is a 338-amino-acid chain: Ketol-acid reductoisomerase (NADP(+)) (338 aa).

Positions 1–181 (MKVFYDKDAD…GGGKAGIIET (181 aa)) constitute a KARI N-terminal Rossmann domain. NADP(+) contacts are provided by residues 24 to 27 (YGSQ), R47, and S52. Residue H107 is part of the active site. G133 lines the NADP(+) pocket. The KARI C-terminal knotted domain maps to 182 to 327 (NFREETETDL…EKLRAMMPWI (146 aa)). Mg(2+) is bound by residues D190, E194, E226, and E230. S251 is a binding site for substrate.

The protein belongs to the ketol-acid reductoisomerase family. The cofactor is Mg(2+).

The enzyme catalyses (2R)-2,3-dihydroxy-3-methylbutanoate + NADP(+) = (2S)-2-acetolactate + NADPH + H(+). The catalysed reaction is (2R,3R)-2,3-dihydroxy-3-methylpentanoate + NADP(+) = (S)-2-ethyl-2-hydroxy-3-oxobutanoate + NADPH + H(+). It participates in amino-acid biosynthesis; L-isoleucine biosynthesis; L-isoleucine from 2-oxobutanoate: step 2/4. Its pathway is amino-acid biosynthesis; L-valine biosynthesis; L-valine from pyruvate: step 2/4. In terms of biological role, involved in the biosynthesis of branched-chain amino acids (BCAA). Catalyzes an alkyl-migration followed by a ketol-acid reduction of (S)-2-acetolactate (S2AL) to yield (R)-2,3-dihydroxy-isovalerate. In the isomerase reaction, S2AL is rearranged via a Mg-dependent methyl migration to produce 3-hydroxy-3-methyl-2-ketobutyrate (HMKB). In the reductase reaction, this 2-ketoacid undergoes a metal-dependent reduction by NADPH to yield (R)-2,3-dihydroxy-isovalerate. The sequence is that of Ketol-acid reductoisomerase (NADP(+)) from Leptothrix cholodnii (strain ATCC 51168 / LMG 8142 / SP-6) (Leptothrix discophora (strain SP-6)).